Here is a 106-residue protein sequence, read N- to C-terminus: Urease subunit beta (106 aa).

The protein belongs to the urease beta subunit family. As to quaternary structure, heterotrimer of UreA (gamma), UreB (beta) and UreC (alpha) subunits. Three heterotrimers associate to form the active enzyme.

The protein localises to the cytoplasm. It catalyses the reaction urea + 2 H2O + H(+) = hydrogencarbonate + 2 NH4(+). It participates in nitrogen metabolism; urea degradation; CO(2) and NH(3) from urea (urease route): step 1/1. The protein is Urease subunit beta of Acinetobacter baumannii (strain ATCC 17978 / DSM 105126 / CIP 53.77 / LMG 1025 / NCDC KC755 / 5377).